Here is a 353-residue protein sequence, read N- to C-terminus: UPF0283 membrane protein YcjF (353 aa).

The next 3 helical transmembrane spans lie at 70–90 (MVMG…VQWT), 100–120 (VALG…GSVV), and 213–233 (ESTL…FIAW).

This sequence belongs to the UPF0283 family.

It is found in the cell inner membrane. The sequence is that of UPF0283 membrane protein YcjF from Salmonella schwarzengrund (strain CVM19633).